We begin with the raw amino-acid sequence, 590 residues long: L-asparaginase (590 aa).

In terms of domain architecture, Asparaginase/glutaminase spans 6 to 357 (AHVLVLYTGG…VEKKAMMVKN (352 aa)). Residue Thr-16 is the O-isoaspartyl threonine intermediate of the active site. An asparaginase region spans residues 44 to 351 (NDDDYVSTYY…KDCWELVEKK (308 aa)). Substrate-binding positions include 85 to 87 (DSS) and 117 to 118 (TD). ANK repeat units lie at residues 398–427 (IFPQ…DLSV), 431–460 (NGRN…SFHL), 497–526 (RLGV…DINQ), and 530–559 (NGET…DPYK).

This sequence in the N-terminal section; belongs to the asparaginase 1 family. In terms of tissue distribution, may be present in the larval cuticle.

It carries out the reaction L-asparagine + H2O = L-aspartate + NH4(+). This is L-asparaginase from Dirofilaria immitis (Canine heartworm).